The primary structure comprises 111 residues: TPR repeat-containing protein associated with Hsp90 (111 aa).

Position 2 is an N-acetylserine (serine 2). 2 TPR repeats span residues 4-37 and 39-71; these read FEKQKEQGNSLFKQGLYREAVHCYDQLITAQPQN and VGYSNKAMALIKLGEYTQAIQMCQQGLRYTSTA.

As to quaternary structure, component of the R2TP complex composed at least of RVB1, RVB2, TAH1 and PIH1. Also interacts with HSP90.

The protein resides in the cytoplasm. It localises to the nucleus. The chain is TPR repeat-containing protein associated with Hsp90 (TAH1) from Saccharomyces cerevisiae (strain ATCC 204508 / S288c) (Baker's yeast).